We begin with the raw amino-acid sequence, 625 residues long: Phosphomethylpyrimidine synthase (625 aa).

Substrate is bound by residues Asn-231, Met-260, Tyr-289, His-325, 345–347, 386–389, and Glu-425; these read SRG and DGLR. His-429 lines the Zn(2+) pocket. Tyr-452 is a binding site for substrate. A Zn(2+)-binding site is contributed by His-493. The [4Fe-4S] cluster site is built by Cys-573, Cys-576, and Cys-581.

This sequence belongs to the ThiC family. Homodimer. Requires [4Fe-4S] cluster as cofactor.

The catalysed reaction is 5-amino-1-(5-phospho-beta-D-ribosyl)imidazole + S-adenosyl-L-methionine = 4-amino-2-methyl-5-(phosphooxymethyl)pyrimidine + CO + 5'-deoxyadenosine + formate + L-methionine + 3 H(+). It functions in the pathway cofactor biosynthesis; thiamine diphosphate biosynthesis. In terms of biological role, catalyzes the synthesis of the hydroxymethylpyrimidine phosphate (HMP-P) moiety of thiamine from aminoimidazole ribotide (AIR) in a radical S-adenosyl-L-methionine (SAM)-dependent reaction. The protein is Phosphomethylpyrimidine synthase of Acinetobacter baumannii (strain AB0057).